Consider the following 165-residue polypeptide: Regulatory protein RecX (165 aa).

It belongs to the RecX family.

Its subcellular location is the cytoplasm. In terms of biological role, modulates RecA activity. This chain is Regulatory protein RecX, found in Cronobacter sakazakii (strain ATCC BAA-894) (Enterobacter sakazakii).